We begin with the raw amino-acid sequence, 432 residues long: 3-phosphoshikimate 1-carboxyvinyltransferase (432 aa).

3-phosphoshikimate-binding residues include K23, S24, and R28. Phosphoenolpyruvate is bound at residue K23. Residues G95 and R123 each coordinate phosphoenolpyruvate. Residues S167, Q169, D316, and K343 each contribute to the 3-phosphoshikimate site. Q169 is a phosphoenolpyruvate binding site. The Proton acceptor role is filled by D316. 2 residues coordinate phosphoenolpyruvate: R347 and R391.

The protein belongs to the EPSP synthase family. In terms of assembly, monomer.

The protein localises to the cytoplasm. It catalyses the reaction 3-phosphoshikimate + phosphoenolpyruvate = 5-O-(1-carboxyvinyl)-3-phosphoshikimate + phosphate. Its pathway is metabolic intermediate biosynthesis; chorismate biosynthesis; chorismate from D-erythrose 4-phosphate and phosphoenolpyruvate: step 6/7. Functionally, catalyzes the transfer of the enolpyruvyl moiety of phosphoenolpyruvate (PEP) to the 5-hydroxyl of shikimate-3-phosphate (S3P) to produce enolpyruvyl shikimate-3-phosphate and inorganic phosphate. This Limosilactobacillus fermentum (strain NBRC 3956 / LMG 18251) (Lactobacillus fermentum) protein is 3-phosphoshikimate 1-carboxyvinyltransferase.